The following is a 130-amino-acid chain: uncharacterized protein (130 aa).

This is an uncharacterized protein from Saccharomyces cerevisiae (strain ATCC 204508 / S288c) (Baker's yeast).